A 479-amino-acid chain; its full sequence is D-alanyl-D-alanine carboxypeptidase DacB (479 aa).

The first 26 residues, 1–26, serve as a signal peptide directing secretion; the sequence is MKKLSSISTALGSFLLSVSFSLPTFA. The Acyl-ester intermediate role is filled by Ser-69. Lys-72 (proton acceptor) is an active-site residue. Residue Ser-310 is part of the active site. Lys-420 contacts substrate.

It belongs to the peptidase S13 family.

The protein resides in the periplasm. The catalysed reaction is Preferential cleavage: (Ac)2-L-Lys-D-Ala-|-D-Ala. Also transpeptidation of peptidyl-alanyl moieties that are N-acyl substituents of D-alanine.. It functions in the pathway cell wall biogenesis; peptidoglycan biosynthesis. Not involved in transpeptidation but exclusively catalyzes a DD-carboxypeptidase and DD-endopeptidase reaction. This Haemophilus influenzae (strain ATCC 51907 / DSM 11121 / KW20 / Rd) protein is D-alanyl-D-alanine carboxypeptidase DacB (dacB).